The chain runs to 239 residues: Large ribosomal subunit protein uL1 (239 aa).

Belongs to the universal ribosomal protein uL1 family. As to quaternary structure, part of the 50S ribosomal subunit.

Functionally, binds directly to 23S rRNA. The L1 stalk is quite mobile in the ribosome, and is involved in E site tRNA release. In terms of biological role, protein L1 is also a translational repressor protein, it controls the translation of the L11 operon by binding to its mRNA. This chain is Large ribosomal subunit protein uL1, found in Rickettsia bellii (strain OSU 85-389).